Reading from the N-terminus, the 316-residue chain is Pantothenate kinase (316 aa).

95-102 (GSVAVGKS) lines the ATP pocket.

The protein belongs to the prokaryotic pantothenate kinase family.

It localises to the cytoplasm. The catalysed reaction is (R)-pantothenate + ATP = (R)-4'-phosphopantothenate + ADP + H(+). The protein operates within cofactor biosynthesis; coenzyme A biosynthesis; CoA from (R)-pantothenate: step 1/5. In Sodalis glossinidius (strain morsitans), this protein is Pantothenate kinase.